The primary structure comprises 367 residues: MDHVKLVNDPIDIAHIHQLLADEGCGASSVFVGTTRDNFQGKKVLSLAYEAYDSMALKEMNKICSDLRSKWLDLKHIVIYHRLGTVPVCEASVVIAASSPHRSEALESVSFAIDQLKTRVPIWKKEIYDGDNDSEWKENKESIRPKKSKSGFNYAACPCKVEESHDVPRTLVQIRVNDAELTKRLECFVNRKRDEINSQNVIDFKSSFVSSDQNLSDSCARTQSTIIKQEQSNCHLKVRRVNNRCGPQQMEMRPNYELELNKLMGSRDGQTDPTKEMRKSLPNSRLQAIESYMGLTTDNEENIFSRIKRVENRLLQLESISPEYRHFTKREPSSMEAAPPKKSRKKSYSAQELSAFIQKIKDGSELS.

Substrate-binding positions include 101–102, Lys-117, and 124–126; these read HR and KKE. Residues 325-350 are disordered; that stretch reads RHFTKREPSSMEAAPPKKSRKKSYSA.

It belongs to the MoaE family. MOCS2B subfamily. As to quaternary structure, heterotetramer; composed of 2 small (Mocs2A) and 2 large (Mocs2B) subunits. Component of the Ada2a-containing (ATAC) complex composed of at least Ada2a, Atac1, Hcf, Ada3, Gcn5, Mocs2B, Charac-14, Atac3, Atac2, NC2beta and wds.

Its subcellular location is the cytoplasm. It is found in the nucleus. The catalysed reaction is 2 [molybdopterin-synthase sulfur-carrier protein]-C-terminal-Gly-aminoethanethioate + cyclic pyranopterin phosphate + H2O = molybdopterin + 2 [molybdopterin-synthase sulfur-carrier protein]-C-terminal Gly-Gly + 2 H(+). The protein operates within cofactor biosynthesis; molybdopterin biosynthesis. Its function is as follows. Catalytic subunit of the molybdopterin synthase complex, a complex that catalyzes the conversion of precursor Z into molybdopterin. Acts by mediating the incorporation of 2 sulfur atoms from thiocarboxylated Mocs2A into precursor Z to generate a dithiolene group. Involved during biosynthesis of the molybdenum cofactor. The polypeptide is Molybdopterin synthase catalytic subunit (Drosophila melanogaster (Fruit fly)).